A 477-amino-acid polypeptide reads, in one-letter code: MVTATATATNVGYITQVIGPVIDAEFPSGKLPEIYNALKVEGTTESGLKVNVTFEVQQLLGDNRVRAVAMSSTDGLVRGMPVVDTGAPITVPVGQPTLGRIFNVLGEPVDQGEPVQAQEFAPIHRSAPPLVDLTIKPEPFETGIKVIDLLAPFKKGGKVGLFGGAGVGKTVLIQELIHNIAEEHSGLSVFAGVGERTREGNDLYNEMKESGVLDKVALVYGQMNEPPGARMRVGLTALTMAEYFRDVNKQDVLLFIDNIFRFVQAGSEVSALLGRMPSAVGYQPTLATEMGNLQERITSTKQGSITSVQAVYVPADDLTDPAPATTFAHLDSTVVLSRSLAAKGIYPAVDPLDSSSTILQADIVGEEHYNTARAVKQTLQRYKELQDIIAILGLDELSEEDKLVVARARRIERFLSQPFFVAEVFTGSPGKYVKLADTIKGFQRILSGELDNLPEQAFYLVGTIEEAIEKAEKLKSK.

Residue 163–170 (GGAGVGKT) participates in ATP binding.

The protein belongs to the ATPase alpha/beta chains family. F-type ATPases have 2 components, CF(1) - the catalytic core - and CF(0) - the membrane proton channel. CF(1) has five subunits: alpha(3), beta(3), gamma(1), delta(1), epsilon(1). CF(0) has four main subunits: a(1), b(1), b'(1) and c(9-12).

It localises to the cellular thylakoid membrane. It carries out the reaction ATP + H2O + 4 H(+)(in) = ADP + phosphate + 5 H(+)(out). Functionally, produces ATP from ADP in the presence of a proton gradient across the membrane. The catalytic sites are hosted primarily by the beta subunits. The protein is ATP synthase subunit beta of Synechococcus sp. (strain JA-2-3B'a(2-13)) (Cyanobacteria bacterium Yellowstone B-Prime).